Consider the following 423-residue polypeptide: Amino acid transporter AVT1J (423 aa).

Helical transmembrane passes span 39–59 (CFHG…YALA), 63–83 (WLSL…AILI), 110–130 (VIVS…FLIL), 151–171 (FQGK…SVWL), 186–206 (FASG…GVGF), 219–239 (VATS…FPTL), 252–272 (VMII…VLGY), 297–317 (AIWT…TPII), 333–355 (ASGF…LLPF), 359–381 (LMSL…LCYL), and 390–410 (LGFE…VVIT).

The protein belongs to the amino acid/polyamine transporter 2 family. Amino acid/auxin permease (AAAP) (TC 2.A.18.5) subfamily.

The protein resides in the membrane. This is Amino acid transporter AVT1J from Arabidopsis thaliana (Mouse-ear cress).